A 44-amino-acid chain; its full sequence is Protein PsbN (44 aa).

Residues 6–26 (FFFSLFVWCLLLSITAYSLYV) traverse the membrane as a helical segment.

Belongs to the PsbN family.

The protein resides in the plastid. It localises to the chloroplast thylakoid membrane. May play a role in photosystem I and II biogenesis. This is Protein PsbN from Tupiella akineta (Green alga).